The chain runs to 140 residues: uncharacterized protein (140 aa).

The next 2 helical transmembrane spans lie at 33 to 53 (LLYVFLFIIFANCVVDVKYYF) and 59 to 79 (SLLFVYFFLTLIILLVSFMGF). The segment covering 89–104 (EAEPDYRKKQESKNQD) has biased composition (basic and acidic residues). The segment at 89–140 (EAEPDYRKKQESKNQDFLKSQSNEPLEYASSSAVELEKEKNTREGLTILESS) is disordered. Over residues 105–121 (FLKSQSNEPLEYASSSA) the composition is skewed to polar residues.

It localises to the membrane. This is an uncharacterized protein from Schizosaccharomyces pombe (strain 972 / ATCC 24843) (Fission yeast).